Here is a 311-residue protein sequence, read N- to C-terminus: Pyrimidine-specific ribonucleoside hydrolase RihA (311 aa).

Residue His240 is part of the active site.

The protein belongs to the IUNH family. RihA subfamily.

Its function is as follows. Hydrolyzes cytidine or uridine to ribose and cytosine or uracil, respectively. The polypeptide is Pyrimidine-specific ribonucleoside hydrolase RihA (Salmonella newport (strain SL254)).